The following is a 584-amino-acid chain: Lamin-B1 (584 aa).

The segment at 1–22 is disordered; it reads MAAAVAPLSPQPRGAAASAALS. The segment at 2-33 is head; that stretch reads AAAVAPLSPQPRGAAASAALSPTRISRLQEKE. S22 bears the Phosphoserine mark. Residues 31–387 form the IF rod domain; the sequence is EKEELRQLND…KLLESEEERL (357 aa). The segment at 34–70 is coil 1A; that stretch reads ELRQLNDRLAVYIDKVRSLETENSALQRRVSEREQVC. Residues 81 to 218 are coil 1B; it reads FETELADARK…NVYEEEIKET (138 aa). The tract at residues 243–385 is coil 2; sequence QALKEIREQH…YRKLLESEEE (143 aa). Residues 386 to 584 are tail; the sequence is RLRLSPGPSS…RKPERSCVVM (199 aa). Disordered stretches follow at residues 388-431 and 548-584; these read RLSP…SVSI and TVNE…CVVM. Over residues 394 to 408 the composition is skewed to low complexity; that stretch reads SSRVTVSRASSSRSV. The Nuclear localization signal signature appears at 414-419; sequence KRKRID. The 117-residue stretch at 429 to 545 folds into the LTD domain; it reads VSISHSASAT…EEVAQRSTVF (117 aa). Residues 551–565 show a composition bias toward acidic residues; the sequence is EGEEEEEEGEEEILE. Residues 575-584 are compositionally biased toward basic and acidic residues; that stretch reads RKPERSCVVM. Residue C581 is modified to Cysteine methyl ester. C581 carries the S-farnesyl cysteine lipid modification. The propeptide at 582 to 584 is removed in mature form; the sequence is VVM.

This sequence belongs to the intermediate filament family. As to quaternary structure, homodimer. Lamin dimers then assemble into dimeric head-to-tail polymers. Ultimately, two head-to-tail polymers assemble laterally into a protofilament with a uniformly shaped rod of 3.5 nm in diameter. In terms of processing, phosphorylation plays a key role in lamin organization, subcellular localization and nuclear envelope disintegration. Phosphorylation by CDK1 at Ser-22 at the onset of mitosis drives lamin disassembly and nuclear envelope breakdown.

Its subcellular location is the nucleus lamina. The protein resides in the nucleus envelope. It localises to the nucleus. It is found in the nucleoplasm. The protein localises to the nucleus matrix. Its function is as follows. Lamins are intermediate filament proteins that assemble into a filamentous meshwork, and which constitute the major components of the nuclear lamina, a fibrous layer on the nucleoplasmic side of the inner nuclear membrane. Lamins provide a framework for the nuclear envelope, bridging the nuclear envelope and chromatin. Plays an important role in nuclear assembly, chromatin organization, nuclear membrane and telomere dynamics. The protein is Lamin-B1 (LMNB1) of Gallus gallus (Chicken).